Reading from the N-terminus, the 336-residue chain is Ferrochelatase (336 aa).

Residues His-206 and Glu-287 each coordinate Fe cation.

Belongs to the ferrochelatase family.

Its subcellular location is the cytoplasm. It carries out the reaction heme b + 2 H(+) = protoporphyrin IX + Fe(2+). Its pathway is porphyrin-containing compound metabolism; protoheme biosynthesis; protoheme from protoporphyrin-IX: step 1/1. Functionally, catalyzes the ferrous insertion into protoporphyrin IX. This Neisseria meningitidis serogroup C / serotype 2a (strain ATCC 700532 / DSM 15464 / FAM18) protein is Ferrochelatase.